The following is a 79-amino-acid chain: Defensin-like protein 109 (79 aa).

A signal peptide spans 1–24 (MDFTKKILVVFAFTIMLGISSVHC). 4 disulfide bridges follow: Cys-41/Cys-76, Cys-47/Cys-68, Cys-54/Cys-74, and Cys-58/Cys-75.

This sequence belongs to the DEFL family.

Its subcellular location is the secreted. The polypeptide is Defensin-like protein 109 (Arabidopsis thaliana (Mouse-ear cress)).